Here is a 735-residue protein sequence, read N- to C-terminus: FHF complex subunit HOOK-interacting protein 2B (735 aa).

The interval 183–229 (SSSTSDEAAEKDCSGSSSPERASSPSSSSSACSLLSRSGAHPVSSPQ) is disordered. Over residues 196 to 221 (SGSSSPERASSPSSSSSACSLLSRSG) the composition is skewed to low complexity.

This sequence belongs to the FHIP family.

The chain is FHF complex subunit HOOK-interacting protein 2B (fhip2b) from Danio rerio (Zebrafish).